The following is a 413-amino-acid chain: Transmembrane protein 184A (413 aa).

A run of 7 helical transmembrane segments spans residues 47–69 (WLFL…ALVL), 93–113 (LLLI…LLGD), 130–150 (FVIY…GAIM), 187–207 (LQFC…QAFG), 223–243 (VTLI…LFYF), 258–278 (FLTI…LAIL), and 300–320 (LAAG…SVAL). Positions 372–413 (QHYTQQATHEAPRPGTHPSGGSGGSRKSRSLEKRMLIPSEDL) are disordered.

This sequence belongs to the TMEM184 family. Expressed in vascular cells (at protein level).

The protein localises to the cell membrane. The protein resides in the cytoplasm. Its subcellular location is the perinuclear region. It is found in the cytoplasmic vesicle membrane. It localises to the early endosome membrane. The protein localises to the endosome. The protein resides in the cytoplasmic vesicle. Its subcellular location is the secretory vesicle membrane. In terms of biological role, acts as a heparin receptor in vascular cells. May be involved in vesicle transport in exocrine cells and Sertoli cells. The protein is Transmembrane protein 184A (TMEM184A) of Homo sapiens (Human).